The following is a 149-amino-acid chain: uncharacterized protein (149 aa).

2 helical membrane-spanning segments follow: residues 91 to 111 and 122 to 142; these read IFIL…LFHY and ISIL…ICLL.

It localises to the membrane. This is an uncharacterized protein from Dictyostelium discoideum (Social amoeba).